Reading from the N-terminus, the 372-residue chain is 3,5-dihydroxyphenylacetyl-CoA synthase (372 aa).

Cys-160 is an active-site residue.

The protein belongs to the thiolase-like superfamily. Chalcone/stilbene synthases family.

It carries out the reaction 4 malonyl-CoA + 4 H(+) = (3,5-dihydroxyphenyl)acetyl-CoA + 4 CO2 + 3 CoA + H2O. The protein operates within antibiotic biosynthesis. Involved in the biosynthesis of the nonproteinogenic amino acid monomer (S)-3,5-dihydroxyphenylglycine (Dpg) responsible of the production of balhimycin antibiotic. Catalyzes the Claisen condensation of four molecules of malonyl-CoA to yield 3,5-dihydroxyphenylacetyl-CoA (DPA-CoA) and three free coenzyme A (CoA). DpgA requires the presence of the dehydratases DpgB and DpgD to facilitate the aromatization of the DPA-S-DgpA or DPA-S-CoA intermediate. The polypeptide is 3,5-dihydroxyphenylacetyl-CoA synthase (Amycolatopsis balhimycina).